The chain runs to 413 residues: Sensor protein SphS (413 aa).

Residues 176–398 (DVAHELKTPL…WLRVQLPQEP (223 aa)) form the Histidine kinase domain. His-179 carries the phosphohistidine; by autocatalysis modification.

The protein localises to the cytoplasm. The catalysed reaction is ATP + protein L-histidine = ADP + protein N-phospho-L-histidine.. In terms of biological role, member of the two-component regulatory system SphR/SphS. Sensory kinase. Is involved in inducible production of alkaline phosphatase in response to phosphate limitation as it is directly involved in the regulation of phoA transcription in response to phosphate limitation. SphS functions as a protein kinase that phosphorylates SphR. This is Sensor protein SphS (sphS) from Synechococcus elongatus (strain ATCC 33912 / PCC 7942 / FACHB-805) (Anacystis nidulans R2).